Consider the following 315-residue polypeptide: MLSVNELALDIFEELFEYAEELHAVPHELDNGARIVDCGVSTSGGYLTGRRFTEICMGGLGEVDISMGKIRDFPIPFIEVSTDFPSIACLGAQKAGWTVNVNKYFAMGSGPARALSLKPKHTYEVIEYEDEFDYAVICLESDHLPNAAVMENIAEACNVDVANTCAVVAPTASLVGSIQVAGRCVETAVYKLNELGFDTKKITAGIGHAPIAPVKKDGTKAMGSTNDATIYHGSIMLTMNAPEIKDYLDKIPSNKSKGYGKPFYDIFKEANFDFYQIDTSLFSPAEVVINELSEGKVYHVGAVNPEVTLKSFGFI.

Belongs to the MCH family.

It is found in the cytoplasm. The enzyme catalyses 5,10-methenyl-5,6,7,8-tetrahydromethanopterin + H2O = N(5)-formyl-5,6,7,8-tetrahydromethanopterin + H(+). It participates in one-carbon metabolism; methanogenesis from CO(2); 5,10-methenyl-5,6,7,8-tetrahydromethanopterin from CO(2): step 3/3. In terms of biological role, catalyzes the reversible interconversion of 5-formyl-H(4)MPT to methenyl-H(4)MPT(+). The polypeptide is Methenyltetrahydromethanopterin cyclohydrolase (Methanoculleus marisnigri (strain ATCC 35101 / DSM 1498 / JR1)).